Reading from the N-terminus, the 343-residue chain is tRNA N6-adenosine threonylcarbamoyltransferase (343 aa).

Positions 120 and 124 each coordinate Fe cation. Substrate-binding positions include 142-146 (VVSGG), Asp-175, Gly-188, Asp-192, and Asn-281. Fe cation is bound at residue Asp-310.

It belongs to the KAE1 / TsaD family. Fe(2+) serves as cofactor.

The protein resides in the cytoplasm. It carries out the reaction L-threonylcarbamoyladenylate + adenosine(37) in tRNA = N(6)-L-threonylcarbamoyladenosine(37) in tRNA + AMP + H(+). In terms of biological role, required for the formation of a threonylcarbamoyl group on adenosine at position 37 (t(6)A37) in tRNAs that read codons beginning with adenine. Is involved in the transfer of the threonylcarbamoyl moiety of threonylcarbamoyl-AMP (TC-AMP) to the N6 group of A37, together with TsaE and TsaB. TsaD likely plays a direct catalytic role in this reaction. This chain is tRNA N6-adenosine threonylcarbamoyltransferase, found in Bacillus thuringiensis subsp. konkukian (strain 97-27).